The chain runs to 157 residues: Transcription elongation factor GreA (157 aa).

It belongs to the GreA/GreB family.

Its function is as follows. Necessary for efficient RNA polymerase transcription elongation past template-encoded arresting sites. The arresting sites in DNA have the property of trapping a certain fraction of elongating RNA polymerases that pass through, resulting in locked ternary complexes. Cleavage of the nascent transcript by cleavage factors such as GreA or GreB allows the resumption of elongation from the new 3'terminus. GreA releases sequences of 2 to 3 nucleotides. This is Transcription elongation factor GreA from Chelativorans sp. (strain BNC1).